The following is a 633-amino-acid chain: Phosphomethylpyrimidine synthase (633 aa).

Substrate contacts are provided by residues asparagine 245, methionine 274, tyrosine 303, histidine 339, 359–361 (SRG), 400–403 (DGLR), and glutamate 439. Histidine 443 serves as a coordination point for Zn(2+). Tyrosine 466 serves as a coordination point for substrate. Position 507 (histidine 507) interacts with Zn(2+). Residues cysteine 587, cysteine 590, and cysteine 595 each contribute to the [4Fe-4S] cluster site.

Belongs to the ThiC family. As to quaternary structure, homodimer. [4Fe-4S] cluster is required as a cofactor.

The catalysed reaction is 5-amino-1-(5-phospho-beta-D-ribosyl)imidazole + S-adenosyl-L-methionine = 4-amino-2-methyl-5-(phosphooxymethyl)pyrimidine + CO + 5'-deoxyadenosine + formate + L-methionine + 3 H(+). It participates in cofactor biosynthesis; thiamine diphosphate biosynthesis. Its function is as follows. Catalyzes the synthesis of the hydroxymethylpyrimidine phosphate (HMP-P) moiety of thiamine from aminoimidazole ribotide (AIR) in a radical S-adenosyl-L-methionine (SAM)-dependent reaction. The polypeptide is Phosphomethylpyrimidine synthase (Neisseria meningitidis serogroup C (strain 053442)).